The primary structure comprises 997 residues: Serine-repeat antigen protein 5 (997 aa).

The first 22 residues, 1-22 (MKSYISLFFILCVIFNKNVIKC), serve as a signal peptide directing secretion. 2 disordered regions span residues 26 to 107 (SQTG…EKQD) and 181 to 252 (LPSN…PRNL). Gly residues predominate over residues 30 to 51 (NTGGGQAGNTGGDQAGSTGGSP). Low complexity predominate over residues 52–67 (QGSTGASPQGSTGASP). The segment covering 68-84 (QGSTGASQPGSSEPSNP) has biased composition (polar residues). Low complexity-rich tracts occupy residues 85–103 (VSSG…STSS), 183–196 (SNGT…STGT), and 205–235 (SDSS…SSES). Phosphoserine is present on S183. N184 carries N-linked (GlcNAc...) asparagine glycosylation. The segment at 216–253 (SSSSSSSSSSSSSSSSSSESLPANGPDSPTVKPPRNLQ) is interaction with PTKL. N318 carries an N-linked (GlcNAc...) asparagine glycan. The segment at 373-390 (YKYLSEDIVSKFKEIKAE) is interaction with host VTN. A disulfide bond links C445 and C497. The residue at position 549 (T549) is a Phosphothreonine; by CPK1. Cystine bridges form between C567–C572, C581–C610, C593–C636, C627–C672, and C755–C809. The tract at residues 579–997 (NNCISNLQVE…TNNECYFCYV (419 aa)) is thiol-protease-like. Catalysis depends on residues H762 and N787. N828 carries an N-linked (GlcNAc...) asparagine glycan. A propeptide spans 843–886 (KASPEFYHNLYFKNFNVGKKNLFSEKEDNENNKKLGNNYIIFGQ) (inhibition peptide). S866 carries the phosphoserine modification.

The protein belongs to the peptidase C1 family. As to quaternary structure, may interact (via C-terminus) with PTKL (via SAM domain). Interacts (via C-terminus) with human VTN (via hemopexin repeat 2); may form heterotetramers of two VTN and SERA5 P47 heterodimers; the interaction may protect merozoites from phagocytosis by host monocytes; VTN glycosylation appears to be dispensable for the interaction. In terms of assembly, monomer. Interacts with kinase CPK1/CDPK1 at the schizont stage. Phosphorylation by CPK1/CDPK1 increases SERA5 protease activity towards a synthetic peptide in vitro. In terms of processing, just prior to merozoite egress from host erythrocytes, proteolytically cleaved into multiple fragments. Cleaved by SUB1 into p47 and p73, p73 is further cleaved by SUB1 into p56 and p18 and p56 is further processed into p50 by an unidentified protease. p47 remains covalently associated with p18 via disulfide bond. p47 can be processed into p25n and p25c by SUB1. p25c and p25n remain associated with p18. Proteolytic processing is essential for merozoite egress from host erythrocytes. The cleavage of the propeptide to produce p50 is necessary for protease activity and to promote merozoite egress.

It localises to the parasitophorous vacuole. The protein resides in the secreted. The protein localises to the cell membrane. In terms of biological role, plays an essential role during the asexual blood stage development by controlling the kinetics of merozoite egress from host erythrocytes. Specifically, prevents premature rupture of the parasitophorous vacuole and host erythrocyte membranes. Its function is as follows. May prevent merozoite phagocytosis by host monocytes via interaction with host VTN at the merozoite surface. Plays a role in parasite growth. Protease activity is controversial. Has been shown in a number of studies to have protease activity towards a synthetic peptide in vitro. Has also been shown to lack protease activity towards a synthetic peptide in vitro. In Plasmodium falciparum (isolate 3D7), this protein is Serine-repeat antigen protein 5.